A 515-amino-acid polypeptide reads, in one-letter code: Probable coatomer subunit delta (515 aa).

Over residues 161 to 180 the composition is skewed to basic and acidic residues; the sequence is AKQAMAEKAKELKRAQKEAL. The segment at 161-231 is disordered; that stretch reads AKQAMAEKAK…GGKALKLGGK (71 aa). A compositionally biased stretch (low complexity) spans 187–198; the sequence is SYQSSTGISSSS. The 240-residue stretch at 276–515 folds into the MHD domain; the sequence is REVVHVRTEE…TFNSENFEIV (240 aa).

The protein belongs to the adaptor complexes medium subunit family. Delta-COP subfamily. In terms of assembly, oligomeric complex that consists of at least the alpha, beta, beta', gamma, delta, epsilon and zeta subunits.

It localises to the cytoplasm. The protein resides in the golgi apparatus membrane. Its subcellular location is the cytoplasmic vesicle. The protein localises to the COPI-coated vesicle membrane. In terms of biological role, the coatomer is a cytosolic protein complex that binds to dilysine motifs and reversibly associates with Golgi non-clathrin-coated vesicles, which further mediate biosynthetic protein transport from the ER, via the Golgi up to the trans Golgi network. Coatomer complex is required for budding from Golgi membranes, and is essential for the retrograde Golgi-to-ER transport of dilysine-tagged proteins. In Caenorhabditis elegans, this protein is Probable coatomer subunit delta.